Reading from the N-terminus, the 525-residue chain is 2,3-bisphosphoglycerate-independent phosphoglycerate mutase (525 aa).

Asp-18 and Ser-68 together coordinate Mn(2+). Ser-68 (phosphoserine intermediate) is an active-site residue. Substrate is bound by residues His-129, 159-160 (RD), Arg-194, Arg-200, 269-272 (RADR), and Lys-345. Mn(2+) is bound by residues Asp-413, His-417, Asp-454, His-455, and His-473.

The protein belongs to the BPG-independent phosphoglycerate mutase family. Monomer. The cofactor is Mn(2+).

It carries out the reaction (2R)-2-phosphoglycerate = (2R)-3-phosphoglycerate. It participates in carbohydrate degradation; glycolysis; pyruvate from D-glyceraldehyde 3-phosphate: step 3/5. Its function is as follows. Catalyzes the interconversion of 2-phosphoglycerate and 3-phosphoglycerate. The polypeptide is 2,3-bisphosphoglycerate-independent phosphoglycerate mutase (Chromohalobacter salexigens (strain ATCC BAA-138 / DSM 3043 / CIP 106854 / NCIMB 13768 / 1H11)).